A 959-amino-acid chain; its full sequence is Translation initiation factor IF-2 (959 aa).

Residues 33–373 (SHASSVEEAD…PVTERKFHEL (341 aa)) are disordered. Residues 46–60 (IASSFSAGVTKNVQA) show a composition bias toward polar residues. A compositionally biased stretch (basic and acidic residues) spans 63-73 (AKDKQVAEQKA). Positions 76-100 (AKATTPQPAASKAAEKPAAATQEAS) are enriched in low complexity. Composition is skewed to basic and acidic residues over residues 112–125 (FKAE…EQVA), 134–143 (SNDRKSDYRQ), and 179–192 (NDGH…DKNR). Positions 193–211 (SFNANSRQQDIGRQGQTQA) are enriched in polar residues. Composition is skewed to basic and acidic residues over residues 234-258 (ARQR…RQEA) and 266-276 (QTEDKKHREAP). Residues 277–287 (AKATEPAEPVA) are compositionally biased toward low complexity. Residues 306–323 (NRPDKAHDRDHGLEDGQK) show a composition bias toward basic and acidic residues. Positions 328–346 (SWNSQNQVRNQKNSNWNNN) are enriched in low complexity. The span at 347–357 (KKNKKGKHHKN) shows a compositional bias: basic residues. In terms of domain architecture, tr-type G spans 460-629 (ERAPVVTIMG…LLVAEVEELK (170 aa)). Residues 469–476 (GHVDHGKT) form a G1 region. A GTP-binding site is contributed by 469-476 (GHVDHGKT). The segment at 494–498 (GITQH) is G2. The tract at residues 515-518 (DTPG) is G3. Residues 515 to 519 (DTPGH) and 569 to 572 (NKID) each bind GTP. The tract at residues 569–572 (NKID) is G4. The interval 605-607 (SAK) is G5.

Belongs to the TRAFAC class translation factor GTPase superfamily. Classic translation factor GTPase family. IF-2 subfamily.

The protein localises to the cytoplasm. One of the essential components for the initiation of protein synthesis. Protects formylmethionyl-tRNA from spontaneous hydrolysis and promotes its binding to the 30S ribosomal subunits. Also involved in the hydrolysis of GTP during the formation of the 70S ribosomal complex. This chain is Translation initiation factor IF-2, found in Streptococcus equi subsp. zooepidemicus (strain H70).